We begin with the raw amino-acid sequence, 88 residues long: Conotoxin Gm9.1 (88 aa).

A signal peptide spans 1 to 27 (MHLSLARSAVLMLLLLFALGNFVVVQS). Residues 28–58 (GLITRDVDNGQLTDNRRNLQTEWNPLSLFMS) constitute a propeptide that is removed on maturation. Disulfide bonds link Cys62–Cys76, Cys66–Cys78, and Cys72–Cys83. The residue at position 87 (Asn87) is an Asparagine amide.

Belongs to the conotoxin P superfamily. Expressed by the venom duct.

The protein localises to the secreted. Neurotoxin. In vivo, elicits 'spasmodic' symptomatology. The protein is Conotoxin Gm9.1 of Conus gloriamaris (Glory-of-the-Sea cone).